The chain runs to 275 residues: Thiazole synthase (275 aa).

K108 serves as the catalytic Schiff-base intermediate with DXP. Residues G169, 196-197 (AG), and 218-219 (NT) contribute to the 1-deoxy-D-xylulose 5-phosphate site.

Belongs to the ThiG family. As to quaternary structure, homotetramer. Forms heterodimers with either ThiH or ThiS.

Its subcellular location is the cytoplasm. It catalyses the reaction [ThiS sulfur-carrier protein]-C-terminal-Gly-aminoethanethioate + 2-iminoacetate + 1-deoxy-D-xylulose 5-phosphate = [ThiS sulfur-carrier protein]-C-terminal Gly-Gly + 2-[(2R,5Z)-2-carboxy-4-methylthiazol-5(2H)-ylidene]ethyl phosphate + 2 H2O + H(+). The protein operates within cofactor biosynthesis; thiamine diphosphate biosynthesis. Its function is as follows. Catalyzes the rearrangement of 1-deoxy-D-xylulose 5-phosphate (DXP) to produce the thiazole phosphate moiety of thiamine. Sulfur is provided by the thiocarboxylate moiety of the carrier protein ThiS. In vitro, sulfur can be provided by H(2)S. The sequence is that of Thiazole synthase from Ralstonia nicotianae (strain ATCC BAA-1114 / GMI1000) (Ralstonia solanacearum).